We begin with the raw amino-acid sequence, 24 residues long: Brevinin-1Bb (24 aa).

C18 and C24 are disulfide-bonded.

Expressed by the skin glands.

Its subcellular location is the secreted. In terms of biological role, antibacterial activity against Gram-positive bacterium S.aureus and Gram-negative bacterium E.coli. Has activity against C.albicans. The sequence is that of Brevinin-1Bb from Lithobates berlandieri (Rio Grande leopard frog).